The sequence spans 181 residues: Inner membrane-spanning protein YciB (181 aa).

The next 5 helical transmembrane spans lie at 22–42 (IYTA…ILYF), 50–70 (MHLV…AFHD), 72–92 (AFIK…LAVS), 118–138 (VTWY…YVAF), and 148–168 (FKVF…VFYI).

It belongs to the YciB family.

Its subcellular location is the cell inner membrane. In terms of biological role, plays a role in cell envelope biogenesis, maintenance of cell envelope integrity and membrane homeostasis. This is Inner membrane-spanning protein YciB from Shewanella denitrificans (strain OS217 / ATCC BAA-1090 / DSM 15013).